A 985-amino-acid chain; its full sequence is UPF0182 protein cgR_0895 (985 aa).

7 helical membrane passes run 19–39 (VTWI…SVGF), 63–83 (IVLF…AGYF), 115–135 (VMVL…QRSW), 176–196 (SMML…MGGI), 215–235 (TQLA…YWLD), 262–282 (KIIL…AIFL), and 290–310 (LAVV…PLML). The segment at 906-944 (AQDIEEVDGTTTTPSTDETDTDTDQPATETPTAPVSEAE) is disordered. Low complexity predominate over residues 929–939 (DQPATETPTAP).

Belongs to the UPF0182 family.

The protein localises to the cell membrane. The polypeptide is UPF0182 protein cgR_0895 (Corynebacterium glutamicum (strain R)).